Reading from the N-terminus, the 189-residue chain is Marginal zone B- and B1-cell-specific protein (189 aa).

Residues 1–22 (MRLSLPLLLLLLGAWAIPGGLG) form the signal peptide. 3 disulfide bridges follow: Cys50–Cys178, Cys53–Cys171, and Cys95–Cys143. A Prevents secretion from ER motif is present at residues 186 to 189 (REEL).

The protein belongs to the MZB1 family. As to quaternary structure, part of the ER chaperone complex, a multi-protein complex in the endoplasmic reticulum containing a large number of molecular chaperones which associates with unassembled incompletely folded immunoglobulin heavy chains. Isoform 2 interacts with CASP2 and CASP9. Interacts with HSP90B1 and PDIA3 in a calcium-dependent manner. Forms an interchain disulfide bond with IgM monomers. As to expression, widely expressed with highest levels in adult brain, small intestine and lymphoid tissues such as thymus and spleen. Expression is frequently lower in intestinal-type gastric cancer. In obese patients, more abundant in omental than in subcutaneous fat.

It is found in the endoplasmic reticulum lumen. It localises to the secreted. The protein resides in the cytoplasm. Functionally, associates with immunoglobulin M (IgM) heavy and light chains and promotes IgM assembly and secretion. May exert its effect by acting as a molecular chaperone or as an oxidoreductase as it displays a low level of oxidoreductase activity. Isoform 2 may be involved in regulation of apoptosis. Helps to diversify peripheral B-cell functions by regulating Ca(2+) stores, antibody secretion and integrin activation. Its function is as follows. Acts as a hormone-regulated adipokine/pro-inflammatory cytokine that is implicated in causing chronic inflammation, affecting cellular expansion and blunting insulin response in adipocytes. May have a role in the onset of insulin resistance. This is Marginal zone B- and B1-cell-specific protein (MZB1) from Homo sapiens (Human).